We begin with the raw amino-acid sequence, 349 residues long: Isopentenyl-diphosphate delta-isomerase (349 aa).

Arginine 6–lysine 7 contacts substrate. Residues alanine 62–threonine 64, serine 93, and asparagine 122 contribute to the FMN site. Position 152 (glutamine 152) interacts with substrate. Glutamate 153 is a Mg(2+) binding site. FMN-binding positions include lysine 184, threonine 214, glycine 258–glycine 259, and alanine 280–glycine 281.

This sequence belongs to the IPP isomerase type 2 family. Homooctamer. Dimer of tetramers. Requires FMN as cofactor. NADPH serves as cofactor. Mg(2+) is required as a cofactor.

The protein localises to the cytoplasm. It carries out the reaction isopentenyl diphosphate = dimethylallyl diphosphate. Involved in the biosynthesis of isoprenoids. Catalyzes the 1,3-allylic rearrangement of the homoallylic substrate isopentenyl (IPP) to its allylic isomer, dimethylallyl diphosphate (DMAPP). In Bacillus anthracis (strain A0248), this protein is Isopentenyl-diphosphate delta-isomerase.